Here is a 1960-residue protein sequence, read N- to C-terminus: Transcription factor 20 (1960 aa).

Residues 1 to 18 (MQSFREQSSYHGNQQSYP) show a composition bias toward polar residues. Residues 1–287 (MQSFREQSSY…GSNAQAYGTQ (287 aa)) form a disordered region. Residues 42–60 (GGTGGSSGSSGSGSGGGRR) show a composition bias toward gly residues. Arg60 is modified (omega-N-methylarginine). A compositionally biased stretch (low complexity) spans 61 to 75 (GAAAAAAAMASETSG). A compositionally biased stretch (polar residues) spans 122 to 131 (QGSSFGNQYG). The segment covering 164–192 (SAQYQQQASSQQQQQQVQQLRQQLYQSHQ) has biased composition (low complexity). The span at 193–219 (PLPQATGQPASSSSHLQPMQRPSTLPS) shows a compositional bias: polar residues. Low complexity predominate over residues 236–259 (QSSASSSSSSSFPSPQRFSQSGQS). Composition is skewed to polar residues over residues 260-270 (YDGSYNVNAGS) and 277-287 (VGSNAQAYGTQ). A Glycyl lysine isopeptide (Lys-Gly) (interchain with G-Cter in SUMO2) cross-link involves residue Lys304. Disordered stretches follow at residues 305 to 328 (IPQGTQQGQQQQQPQQQQHPSQHV) and 360 to 392 (FHQNFSPISNPSPAASVVQSPSCSSTPSPLMQT). Composition is skewed to low complexity over residues 306–322 (PQGTQQGQQQQQPQQQQ) and 368–388 (SNPSPAASVVQSPSCSSTPSP). 2 positions are modified to phosphoserine: Ser419 and Ser430. The interval 476 to 748 (SDALTPQKKT…HGERKGRNEK (273 aa)) is disordered. Polar residues-rich tracts occupy residues 497–508 (SCTNSEGSSQPE) and 537–547 (LSGQSTSSDTT). Residues Ser538, Ser559, Ser574, and Ser583 each carry the phosphoserine modification. Lys602 bears the N6-acetyllysine mark. Positions 616–628 (RVEKPGGQDKGSQ) are enriched in basic and acidic residues. Ser640 carries the post-translational modification Phosphoserine. Low complexity predominate over residues 665 to 677 (GNKNGDNNSNHNG). The segment covering 693–702 (TSRTEPSKSP) has biased composition (polar residues). Glycyl lysine isopeptide (Lys-Gly) (interchain with G-Cter in SUMO2) cross-links involve residues Lys710, Lys733, Lys748, Lys823, Lys832, and Lys844. The segment covering 732 to 748 (EKGDFTGHGERKGRNEK) has biased composition (basic and acidic residues). Phosphoserine is present on Ser871. Glycyl lysine isopeptide (Lys-Gly) (interchain with G-Cter in SUMO2) cross-links involve residues Lys920 and Lys922. The disordered stretch occupies residues 920–1037 (KLKSQSGQIK…GDPHHMNPHM (118 aa)). Lys929 is covalently cross-linked (Glycyl lysine isopeptide (Lys-Gly) (interchain with G-Cter in SUMO1); alternate). A Glycyl lysine isopeptide (Lys-Gly) (interchain with G-Cter in SUMO2); alternate cross-link involves residue Lys929. Residues 936–945 (SKSQASFNNK) show a composition bias toward polar residues. Positions 946–961 (KSGDHCHPPSIKHESY) are enriched in basic and acidic residues. Lys957 is covalently cross-linked (Glycyl lysine isopeptide (Lys-Gly) (interchain with G-Cter in SUMO2)). Ser966 and Ser1005 each carry phosphoserine. A Glycyl lysine isopeptide (Lys-Gly) (interchain with G-Cter in SUMO2) cross-link involves residue Lys1015. Arg1024 is modified (omega-N-methylarginine). A Phosphoserine modification is found at Ser1053. Residues Lys1086, Lys1098, Lys1137, Lys1173, Lys1178, Lys1183, Lys1210, Lys1231, Lys1267, and Lys1274 each participate in a glycyl lysine isopeptide (Lys-Gly) (interchain with G-Cter in SUMO2) cross-link. Disordered stretches follow at residues 1110-1142 (AAAQHRQEGPRKSPRQQQFLDRVRSPLKNDKDG), 1162-1285 (RCLM…GRLL), and 1303-1331 (SHSQDIKSIPKRDSSKDLPSPDSRNCPAV). The segment covering 1130–1142 (DRVRSPLKNDKDG) has biased composition (basic and acidic residues). The interval 1170-1191 (LPNKGMELKHGSQKLQESCWDL) is leucine-zipper. The Nuclear localization signal motif lies at 1254–1268 (RRRVRSFISPIPSKR). The span at 1304 to 1318 (HSQDIKSIPKRDSSK) shows a compositional bias: basic and acidic residues. Ser1305 bears the Phosphoserine mark. Lys1309 is covalently cross-linked (Glycyl lysine isopeptide (Lys-Gly) (interchain with G-Cter in SUMO2)). Ser1335 carries the post-translational modification Phosphoserine. A Glycyl lysine isopeptide (Lys-Gly) (interchain with G-Cter in SUMO2) cross-link involves residue Lys1338. A Phosphoserine modification is found at Ser1361. The segment at 1384 to 1607 (DILSLKSGPP…TKQAVPIVEP (224 aa)) is disordered. Residues Lys1389, Lys1409, Lys1428, and Lys1446 each participate in a glycyl lysine isopeptide (Lys-Gly) (interchain with G-Cter in SUMO2) cross-link. Residues 1424-1451 (LHVEKPLPRSSEEWRGSVDDKVKTETHA) are compositionally biased toward basic and acidic residues. A compositionally biased stretch (polar residues) spans 1464–1477 (MTSTTSQKPGSNQG). A Glycyl lysine isopeptide (Lys-Gly) (interchain with G-Cter in SUMO2) cross-link involves residue Lys1510. At Ser1522 the chain carries Phosphoserine. Lys1524 participates in a covalent cross-link: Glycyl lysine isopeptide (Lys-Gly) (interchain with G-Cter in SUMO2). The segment at residues 1537–1551 (GKKKGRPIGSVNKQK) is a DNA-binding region (a.T hook). Residues 1555 to 1566 (QPPPPPPQPPQI) are compositionally biased toward pro residues. The Nuclear localization signal motif lies at 1576–1600 (KPKKQRQRRERRKPGAQPRKRKTKQ). A compositionally biased stretch (basic residues) spans 1578 to 1599 (KKQRQRRERRKPGAQPRKRKTK). Lys1613 participates in a covalent cross-link: Glycyl lysine isopeptide (Lys-Gly) (interchain with G-Cter in SUMO2). Disordered regions lie at residues 1660–1683 (LVRGRKGQRSLTPPPSSTESKALP) and 1732–1839 (TLPK…PELE). At Ser1669 the chain carries Phosphoserine. Thr1671, Thr1762, and Thr1764 each carry phosphothreonine. Positions 1785 to 1792 (RFKRRHRS) match the Nuclear localization signal motif. The segment at 1829–1865 (PTTSEGGPELELQIPELPLDSNEFWVHEGCILWANGI) adopts a C2HC pre-PHD-type; degenerate zinc-finger fold. A PHD-type zinc finger spans residues 1885–1933 (MKCSHCQEAGATLGCYNKGCSFRYHYPCAIDADCLLHEENFSVRCPKHK). The interval 1939–1960 (PLPPLQNKTAKGSLSTEQSERG) is disordered. A compositionally biased stretch (polar residues) spans 1944–1960 (QNKTAKGSLSTEQSERG).

As to quaternary structure, homodimer. Interacts with RNF4 and JUN. As to expression, expressed in most tissues, except in ovary and prostate. Isoform 1 is exclusively expressed in brain, heart and testis, and this form predominates in liver and kidney. Isoform 2 predominates in lung.

Its subcellular location is the nucleus. Its function is as follows. Transcriptional activator that binds to the regulatory region of MMP3 and thereby controls stromelysin expression. It stimulates the activity of various transcriptional activators such as JUN, SP1, PAX6 and ETS1, suggesting a function as a coactivator. This chain is Transcription factor 20 (TCF20), found in Homo sapiens (Human).